Reading from the N-terminus, the 98-residue chain is Large ribosomal subunit protein uL23 (98 aa).

Belongs to the universal ribosomal protein uL23 family. Part of the 50S ribosomal subunit. Contacts protein L29, and trigger factor when it is bound to the ribosome.

Functionally, one of the early assembly proteins it binds 23S rRNA. One of the proteins that surrounds the polypeptide exit tunnel on the outside of the ribosome. Forms the main docking site for trigger factor binding to the ribosome. This is Large ribosomal subunit protein uL23 from Hydrogenovibrio crunogenus (strain DSM 25203 / XCL-2) (Thiomicrospira crunogena).